The sequence spans 503 residues: Probable cytosol aminopeptidase (503 aa).

Residues lysine 270 and aspartate 275 each coordinate Mn(2+). Residue lysine 282 is part of the active site. Residues aspartate 293, aspartate 352, and glutamate 354 each coordinate Mn(2+). Arginine 356 is an active-site residue.

This sequence belongs to the peptidase M17 family. The cofactor is Mn(2+).

It is found in the cytoplasm. The enzyme catalyses Release of an N-terminal amino acid, Xaa-|-Yaa-, in which Xaa is preferably Leu, but may be other amino acids including Pro although not Arg or Lys, and Yaa may be Pro. Amino acid amides and methyl esters are also readily hydrolyzed, but rates on arylamides are exceedingly low.. The catalysed reaction is Release of an N-terminal amino acid, preferentially leucine, but not glutamic or aspartic acids.. In terms of biological role, presumably involved in the processing and regular turnover of intracellular proteins. Catalyzes the removal of unsubstituted N-terminal amino acids from various peptides. This chain is Probable cytosol aminopeptidase, found in Enterobacter sp. (strain 638).